The chain runs to 237 residues: Ribosomal RNA small subunit methyltransferase G (237 aa).

Residues G75, F80, 127 to 128 (AE), and R146 contribute to the S-adenosyl-L-methionine site.

This sequence belongs to the methyltransferase superfamily. RNA methyltransferase RsmG family.

The protein localises to the cytoplasm. Its function is as follows. Specifically methylates the N7 position of a guanine in 16S rRNA. The sequence is that of Ribosomal RNA small subunit methyltransferase G from Synechococcus sp. (strain RCC307).